Consider the following 187-residue polypeptide: UPF0301 protein ETA_28320 (187 aa).

It belongs to the UPF0301 (AlgH) family.

In Erwinia tasmaniensis (strain DSM 17950 / CFBP 7177 / CIP 109463 / NCPPB 4357 / Et1/99), this protein is UPF0301 protein ETA_28320.